Here is a 195-residue protein sequence, read N- to C-terminus: MMAIRELKVCLLGDTGVGKSSIVCRFVQDHFDHNISPTIGASFMTKTVPCGNELHKFLIWDTAGQERFHSLAPMYYRGSAAAVIVYDITKQDSFHTLKKWVKELKEHGPENIVMAIAGNKCDLSDIREVPLKDAKEYAESIGALVVETSAKNAINIEELFQGISRQIPPLDPHENGNSGGIKLGNQSLQAGRRCC.

GTP is bound by residues Gly-16, Gly-18, Lys-19, Ser-20, Ser-21, Asp-32, and His-33. Position 20 (Ser-20) interacts with Mg(2+). 2 consecutive short sequence motifs (switch) follow at residues 30–42 (HFDH…IGAS) and 63–79 (AGQE…YRGS). Ser-36 carries the phosphoserine modification. 6 residues coordinate GTP: Thr-38, Gly-64, Asn-119, Asp-122, Ala-150, and Lys-151. Residue Thr-38 participates in Mg(2+) binding. Residues Cys-194 and Cys-195 are each lipidated (S-geranylgeranyl cysteine).

It belongs to the small GTPase superfamily. Rab family. Interacts (in GDP-bound form) with RIN3 and GAPVD1, which function as guanine exchange factors (GEF). Interacts (in GTP-bound form) with EEA1. Interacts with NGFR. Interacts with EGFR. Interacts with OCRL. Interacts (in GTP-bound form) with APPL2; interaction contributes to or enhances recruitment of APPL2 to the phagosomes; interaction enhances Fc-gamma receptor-mediated phagocytosis through PI3K/Akt signaling in macrophages. Mg(2+) serves as cofactor. As to expression, detected in brain astrocytes, spleen and intestine (at protein level).

It is found in the early endosome. Its subcellular location is the golgi apparatus. The protein resides in the trans-Golgi network. The protein localises to the trans-Golgi network membrane. It localises to the cytoplasmic vesicle. It is found in the phagosome. Its subcellular location is the phagosome membrane. The catalysed reaction is GTP + H2O = GDP + phosphate + H(+). Its activity is regulated as follows. Regulated by guanine nucleotide exchange factors (GEFs) including RIN3 and GAPVD1 which promote the exchange of bound GDP for free GTP. Regulated by GTPase activating proteins (GAPs) which increase the GTP hydrolysis activity. Inhibited by GDP dissociation inhibitors (GDIs) which prevent Rab-GDP dissociation. In terms of biological role, the small GTPases Rab are key regulators of intracellular membrane trafficking, from the formation of transport vesicles to their fusion with membranes. Rabs cycle between an inactive GDP-bound form and an active GTP-bound form that is able to recruit to membranes different set of downstream effectors directly responsible for vesicle formation, movement, tethering and fusion. Required for the integrity and for normal function of the Golgi apparatus and the trans-Golgi network. Plays a role in insulin-stimulated translocation of GLUT4 to the cell membrane. Plays a role in the maturation of phagosomes that engulf pathogens, such as S.aureus and Mycobacterium. Plays a role in M6PR transport from the trans-Golgi network to endosomes. Plays a role in the internalization of EGFR from the cell membrane into endosomes. The polypeptide is Ras-related protein Rab-31 (Rattus norvegicus (Rat)).